The following is a 499-amino-acid chain: Endoglucanase (499 aa).

Positions 1 to 29 are cleaved as a signal peptide; the sequence is MKRSISIFITCLLIAVLTMGGLLPSPASA. Substrate is bound by residues histidine 65, 69 to 70, tyrosine 96, and histidine 131; that span reads WY. The active-site Proton donor is the glutamate 169. A substrate-binding site is contributed by tyrosine 231. The active-site Nucleophile is glutamate 257. Residues 263–264, tryptophan 291, and 296–298 each bind substrate; these read AS and KQE. A compositionally biased stretch (basic and acidic residues) spans 330 to 340; sequence RGTKDSTKDVP. Residues 330 to 353 are disordered; that stretch reads RGTKDSTKDVPETPAQDNPTQEKG. The CBM3 domain maps to 350-499; the sequence is QEKGVSVQYK…GKLIWGTEPN (150 aa).

Belongs to the glycosyl hydrolase 5 (cellulase A) family.

The catalysed reaction is Endohydrolysis of (1-&gt;4)-beta-D-glucosidic linkages in cellulose, lichenin and cereal beta-D-glucans.. The polypeptide is Endoglucanase (bglC) (Bacillus subtilis).